The primary structure comprises 101 residues: Chaperone modulatory protein CbpM (101 aa).

The protein belongs to the CbpM family.

In terms of biological role, interacts with CbpA and inhibits both the DnaJ-like co-chaperone activity and the DNA binding activity of CbpA. Together with CbpA, modulates the activity of the DnaK chaperone system. Does not inhibit the co-chaperone activity of DnaJ. The protein is Chaperone modulatory protein CbpM of Citrobacter koseri (strain ATCC BAA-895 / CDC 4225-83 / SGSC4696).